A 1070-amino-acid chain; its full sequence is Carbamoyl phosphate synthase large chain (1070 aa).

Residues 1–401 (MPKRDDIKTI…ALLKAVRSLE (401 aa)) form a carboxyphosphate synthetic domain region. Residues Arg-129, Arg-169, Gly-175, Gly-176, Lys-208, Ile-210, Glu-215, Gly-241, Ile-242, His-243, Gln-284, and Glu-298 each coordinate ATP. Residues 133–327 (RDLMNELGEP…IAKLAAKIAV (195 aa)) enclose the ATP-grasp 1 domain. 3 residues coordinate Mg(2+): Gln-284, Glu-298, and Asn-300. 3 residues coordinate Mn(2+): Gln-284, Glu-298, and Asn-300. The segment at 402–546 (IGADHLLLEE…YSTYEEENES (145 aa)) is oligomerization domain. Positions 547 to 929 (TRSAKESVIV…ALYKGFVASG (383 aa)) are carbamoyl phosphate synthetic domain. An ATP-grasp 2 domain is found at 671–861 (EKALEILQIP…MANVATRVIL (191 aa)). 10 residues coordinate ATP: Arg-707, Arg-746, Val-748, Glu-752, Gly-777, Val-778, His-779, Ser-780, Gln-820, and Glu-832. Mg(2+) is bound by residues Gln-820, Glu-832, and Asn-834. 3 residues coordinate Mn(2+): Gln-820, Glu-832, and Asn-834. The 141-residue stretch at 930 to 1070 (TTMHDYGTVL…SEVKQPKARV (141 aa)) folds into the MGS-like domain. Residues 930-1070 (TTMHDYGTVL…SEVKQPKARV (141 aa)) are allosteric domain.

It belongs to the CarB family. In terms of assembly, composed of two chains; the small (or glutamine) chain promotes the hydrolysis of glutamine to ammonia, which is used by the large (or ammonia) chain to synthesize carbamoyl phosphate. Tetramer of heterodimers (alpha,beta)4. Mg(2+) serves as cofactor. It depends on Mn(2+) as a cofactor.

It carries out the reaction hydrogencarbonate + L-glutamine + 2 ATP + H2O = carbamoyl phosphate + L-glutamate + 2 ADP + phosphate + 2 H(+). It catalyses the reaction hydrogencarbonate + NH4(+) + 2 ATP = carbamoyl phosphate + 2 ADP + phosphate + 2 H(+). The protein operates within amino-acid biosynthesis; L-arginine biosynthesis; carbamoyl phosphate from bicarbonate: step 1/1. Its pathway is pyrimidine metabolism; UMP biosynthesis via de novo pathway; (S)-dihydroorotate from bicarbonate: step 1/3. Its function is as follows. Large subunit of the glutamine-dependent carbamoyl phosphate synthetase (CPSase). CPSase catalyzes the formation of carbamoyl phosphate from the ammonia moiety of glutamine, carbonate, and phosphate donated by ATP, constituting the first step of 2 biosynthetic pathways, one leading to arginine and/or urea and the other to pyrimidine nucleotides. The large subunit (synthetase) binds the substrates ammonia (free or transferred from glutamine from the small subunit), hydrogencarbonate and ATP and carries out an ATP-coupled ligase reaction, activating hydrogencarbonate by forming carboxy phosphate which reacts with ammonia to form carbamoyl phosphate. This Listeria monocytogenes serotype 4a (strain HCC23) protein is Carbamoyl phosphate synthase large chain.